The sequence spans 100 residues: Urease subunit gamma (100 aa).

Belongs to the urease gamma subunit family. As to quaternary structure, heterotrimer of UreA (gamma), UreB (beta) and UreC (alpha) subunits. Three heterotrimers associate to form the active enzyme.

The protein resides in the cytoplasm. It carries out the reaction urea + 2 H2O + H(+) = hydrogencarbonate + 2 NH4(+). It functions in the pathway nitrogen metabolism; urea degradation; CO(2) and NH(3) from urea (urease route): step 1/1. This Rhizobium leguminosarum bv. viciae protein is Urease subunit gamma.